The following is a 496-amino-acid chain: MEEQREALRKIITTLAMKNEEIQSFIYSLKQMLLNVEANSTKVQEDLEAEFQSLFSVLEELKEGMLMKIKQDRASRTYELQNQLAACTRALESSEELLETANQTLQAMDREDFPQAAKQIKDGVTMAPAFRLSLKAKVSDNMSHLMVDFAQERQMLQALKFLPVPSAPVIDLAESLVADNCVTLVWRMPDEDSKIDHYVLEYRRTNFEGPPRLKEDQPWMVIEGIRQTEYTLTGLKFDMKYMNFRVKACNKAVAGEFSEPVTLETPAFMFRLDASTSHQNLRVDDLSVEWDAMGGKVQDIKAREKDGKGRTASPINSPARGTPSPKRMPSGRGGRDRFTAESYTVLGDTLIDGGEHYWEVRYEPDSKAFGVGVAYRSLGRFEQLGKTAASWCLHVNNWLQVSFTAKHANKVKVLDAPVPDCLGVHCDFHQGLLSFYNARTKQVLHTFKTRFTQPLLPAFTVWCGSFQVTTGLQVPSSVRCLQKRGSATSSSNTSLT.

Residues 4–99 (QREALRKIIT…ALESSEELLE (96 aa)) adopt a coiled-coil conformation. A COS domain is found at 105 to 162 (LQAMDREDFPQAAKQIKDGVTMAPAFRLSLKAKVSDNMSHLMVDFAQERQMLQALKFL). Positions 164–268 (VPSAPVIDLA…EPVTLETPAF (105 aa)) constitute a Fibronectin type-III domain. The 210-residue stretch at 268–477 (FMFRLDASTS…VTTGLQVPSS (210 aa)) folds into the B30.2/SPRY domain. The tract at residues 301 to 336 (KAREKDGKGRTASPINSPARGTPSPKRMPSGRGGRD) is disordered. An omega-N-methylarginine mark is found at Arg310 and Arg320.

As to quaternary structure, oligomerization is required for binding to microtubules.

The protein localises to the cytoplasm. Its subcellular location is the cytoskeleton. It localises to the microtubule organizing center. The protein resides in the centrosome. It is found in the nucleus. The protein localises to the cleavage furrow. Its function is as follows. May be involved in microtubule organization and stabilization. The sequence is that of Fibronectin type III and SPRY domain-containing protein 1 (FSD1) from Macaca fascicularis (Crab-eating macaque).